The following is a 586-amino-acid chain: Clathrin heavy chain linker domain-containing protein 1 (586 aa).

The stretch at 174-232 (MNLDALTKYMKHLEDKYAEIKQAMLIKYVPAQRKSDLDEEMIVLLKRRDVAENLNRKLQ) forms a coiled coil.

The chain is Clathrin heavy chain linker domain-containing protein 1 (CLHC1) from Macaca fascicularis (Crab-eating macaque).